A 590-amino-acid chain; its full sequence is Sperm-associated microtubule inner protein 4 (590 aa).

Residue Thr219 is modified to Phosphothreonine. Phosphoserine is present on residues Ser407 and Ser422. Lys427 is covalently cross-linked (Glycyl lysine isopeptide (Lys-Gly) (interchain with G-Cter in SUMO2)). Phosphotyrosine is present on Tyr442. Ser485 carries the phosphoserine modification. A Glycyl lysine isopeptide (Lys-Gly) (interchain with G-Cter in SUMO2) cross-link involves residue Lys545. Ser547 bears the Phosphoserine mark.

In terms of tissue distribution, predominantly expressed in the testes.

Its subcellular location is the cytoplasm. It is found in the cytoskeleton. The protein localises to the microtubule organizing center. It localises to the centrosome. The protein resides in the flagellum axoneme. Microtubule inner protein (MIP) part of the dynein-decorated doublet microtubules (DMTs) in flagellum axoneme. May serve to reinforce and thus stabilize the microtubule structure in the sperm flagella. The protein is Sperm-associated microtubule inner protein 4 of Homo sapiens (Human).